We begin with the raw amino-acid sequence, 168 residues long: Dihydrofolate reductase (168 aa).

Positions 1–164 (MIIGIWAEDE…YTFTIKKYEK (164 aa)) constitute a DHFR domain. Residue 5-7 (IWA) participates in substrate binding. NADP(+)-binding positions include 6-7 (WA) and 14-19 (IGEADK). Glu27 contacts substrate. 43–46 (GRKT) contacts NADP(+). Arg58 lines the substrate pocket. NADP(+) contacts are provided by residues 63-66 (LTRD) and 99-104 (TGGAEI). Thr118 contacts substrate.

The protein belongs to the dihydrofolate reductase family.

The catalysed reaction is (6S)-5,6,7,8-tetrahydrofolate + NADP(+) = 7,8-dihydrofolate + NADPH + H(+). It participates in cofactor biosynthesis; tetrahydrofolate biosynthesis; 5,6,7,8-tetrahydrofolate from 7,8-dihydrofolate: step 1/1. In terms of biological role, key enzyme in folate metabolism. Catalyzes an essential reaction for de novo glycine and purine synthesis, and for DNA precursor synthesis. The sequence is that of Dihydrofolate reductase (folA) from Lactococcus lactis subsp. lactis (strain IL1403) (Streptococcus lactis).